Here is a 176-residue protein sequence, read N- to C-terminus: Nucleoside triphosphate/diphosphate phosphatase (176 aa).

The active-site Proton donor is arginine 23. Residues asparagine 87, aspartate 103, aspartate 105, aspartate 107, aspartate 120, and glutamate 123 each contribute to the Mg(2+) site.

The protein belongs to the Ntdp family. The cofactor is Mg(2+).

It catalyses the reaction a ribonucleoside 5'-triphosphate + H2O = a ribonucleoside 5'-diphosphate + phosphate + H(+). The enzyme catalyses a ribonucleoside 5'-diphosphate + H2O = a ribonucleoside 5'-phosphate + phosphate + H(+). Its function is as follows. Has nucleoside phosphatase activity towards nucleoside triphosphates and nucleoside diphosphates. The sequence is that of Nucleoside triphosphate/diphosphate phosphatase (ygaC) from Bacillus subtilis (strain 168).